A 1332-amino-acid polypeptide reads, in one-letter code: Delta-poly-L-ornithine synthetase (1332 aa).

3 residues coordinate L-ornithine: Asp-217, Glu-221, and Thr-304. The D-ornithine site is built by Glu-221, Thr-304, Gly-306, and Thr-308. L-ornithine-binding residues include Val-312 and Ser-313. Residue Ser-313 coordinates D-ornithine. Residues 524–601 form the Carrier domain; that stretch reads QPQNPAEEIL…AIAALMLEQP (78 aa). Position 560 is an O-(pantetheine 4'-phosphoryl)serine (Ser-560). 6 consecutive transmembrane segments (helical) span residues 629–649, 664–684, 868–888, 908–928, 1120–1140, and 1151–1171; these read LVTI…PFFT, AIAL…VLSI, VSAL…FLLV, LYYF…TAVI, IVLP…DVID, and LVAL…IVAL.

This sequence belongs to the ATP-dependent AMP-binding enzyme family. Requires pantetheine 4'-phosphate as cofactor.

It localises to the cell membrane. The catalysed reaction is n L-ornithine + n ATP + H2O = N(5)-(L-ornithyl)-[N(5)-(L-ornithyl)]n-1 + n AMP + n diphosphate + n H(+). It carries out the reaction n D-ornithine + n ATP + H2O = N(5)-(D-ornithyl)-[N(5)-(D-ornithyl)]n-1 + n AMP + n diphosphate + n H(+). Functionally, catalyzes the polymerization of L-ornithine, generating poly-L-ornithine composed of 7-12 amino acid units joined via isopeptide bonds between the carboxylate and the side chain amine. This polymer exhibits potent antifungal activity and thus may have a potential role in survival benefit for A.baumannii. The reaction occurs via ATP-dependent adenylation of the substrate. Can also adenylate D-ornithine with similar efficiency and thus may produce D-ornithine polymers. This is Delta-poly-L-ornithine synthetase from Acinetobacter baumannii (strain AB307-0294).